The chain runs to 348 residues: MEMSFRWYGEDDPVTLENIGQIPTMKGIVTAIYDVPVGEVWSRERIQQLKEKVEAAGLKISVIESVPVHEDIKLGRPTRDLLIDNYIQTVKNLAAEGIDTICYNFMPVFDWTRTDLAYQYPDGSTALIFDETVSKKMDPVNGELSLPGWDASYSKEEMKAIMDAYAEIDEEKLWENLTYFIKRIIPEAEAVGVKMAIHPDDPPYSIFGLPRIITGLEAIERFVKLYDSKSNGITLCVGSYASDPQNDVLEISRRAFELDRVNFVHARNIKLGDGKSFKESAHPSEYGSIDMYEVIKLCHEFGFEGAIRPDHGRMIWGETGRPGYGLYDRALGATYLSGLYEAVIKGSK.

This sequence belongs to the mannonate dehydratase family. Fe(2+) is required as a cofactor. It depends on Mn(2+) as a cofactor.

The catalysed reaction is D-mannonate = 2-dehydro-3-deoxy-D-gluconate + H2O. Its pathway is carbohydrate metabolism; pentose and glucuronate interconversion. Its function is as follows. Catalyzes the dehydration of D-mannonate. In Streptococcus agalactiae serotype III (strain NEM316), this protein is Mannonate dehydratase.